The following is a 178-amino-acid chain: Small ribosomal subunit protein uS7c (178 aa).

Basic and acidic residues predominate over residues 137–146 (QKKEEIEKSK). The disordered stretch occupies residues 137–178 (QKKEEIEKSKSPVNNNKKFISKNKKSKNKKQKKRLKRKKNIY). Residues 155 to 178 (FISKNKKSKNKKQKKRLKRKKNIY) are compositionally biased toward basic residues.

It belongs to the universal ribosomal protein uS7 family. In terms of assembly, part of the 30S ribosomal subunit.

It localises to the plastid. Its function is as follows. One of the primary rRNA binding proteins, it binds directly to 16S rRNA where it nucleates assembly of the head domain of the 30S subunit. In Euglena longa (Euglenophycean alga), this protein is Small ribosomal subunit protein uS7c (rps7).